The following is a 261-amino-acid chain: NAD(P)H-quinone oxidoreductase subunit K, chloroplastic (261 aa).

The [4Fe-4S] cluster site is built by Cys-64, Cys-65, Cys-129, and Cys-160.

This sequence belongs to the complex I 20 kDa subunit family. NDH is composed of at least 16 different subunits, 5 of which are encoded in the nucleus. [4Fe-4S] cluster is required as a cofactor.

The protein resides in the plastid. Its subcellular location is the chloroplast thylakoid membrane. The catalysed reaction is a plastoquinone + NADH + (n+1) H(+)(in) = a plastoquinol + NAD(+) + n H(+)(out). It catalyses the reaction a plastoquinone + NADPH + (n+1) H(+)(in) = a plastoquinol + NADP(+) + n H(+)(out). Its function is as follows. NDH shuttles electrons from NAD(P)H:plastoquinone, via FMN and iron-sulfur (Fe-S) centers, to quinones in the photosynthetic chain and possibly in a chloroplast respiratory chain. The immediate electron acceptor for the enzyme in this species is believed to be plastoquinone. Couples the redox reaction to proton translocation, and thus conserves the redox energy in a proton gradient. The sequence is that of NAD(P)H-quinone oxidoreductase subunit K, chloroplastic from Physcomitrium patens (Spreading-leaved earth moss).